Consider the following 398-residue polypeptide: Elongation factor Tu (398 aa).

Residues 10 to 207 (KIHLNVGTIG…ILDKNIPVPN (198 aa)) enclose the tr-type G domain. The G1 stretch occupies residues 19–26 (GHVDHGKT). GTP is bound at residue 19–26 (GHVDHGKT). Position 26 (threonine 26) interacts with Mg(2+). The G2 stretch occupies residues 60–64 (GITIS). Residues 81 to 84 (DCPG) are G3. GTP is bound by residues 81–85 (DCPGH) and 136–139 (NKAD). Positions 136–139 (NKAD) are G4. A G5 region spans residues 174 to 176 (SAL).

Belongs to the TRAFAC class translation factor GTPase superfamily. Classic translation factor GTPase family. EF-Tu/EF-1A subfamily. Monomer.

It localises to the cytoplasm. It catalyses the reaction GTP + H2O = GDP + phosphate + H(+). Its function is as follows. GTP hydrolase that promotes the GTP-dependent binding of aminoacyl-tRNA to the A-site of ribosomes during protein biosynthesis. In Carsonella ruddii (strain PV), this protein is Elongation factor Tu.